A 134-amino-acid polypeptide reads, in one-letter code: Small ribosomal subunit protein uS11 (134 aa).

The protein belongs to the universal ribosomal protein uS11 family. In terms of assembly, part of the 30S ribosomal subunit. Interacts with proteins S7 and S18. Binds to IF-3.

In terms of biological role, located on the platform of the 30S subunit, it bridges several disparate RNA helices of the 16S rRNA. Forms part of the Shine-Dalgarno cleft in the 70S ribosome. This chain is Small ribosomal subunit protein uS11, found in Paraburkholderia xenovorans (strain LB400).